A 734-amino-acid polypeptide reads, in one-letter code: Photosystem I P700 chlorophyll a apoprotein A2 (734 aa).

Helical transmembrane passes span 46-69 (IFASHFGQLAIIFLWTSGNLFHVA), 135-158 (LYNGALFLVILSSISLIAGWLHLQ), 175-199 (LNHHLSGLFGVSSLAWTGHLVHVAI), 273-291 (IAHHHLAIAVVFIIAGHMY), 330-353 (LHFQLGLALASLGVITSLVAQHMY), 369-395 (AALYTHHQYIAGFIMTGAFAHGAIFFI), 417-439 (AIISHLSWASLFLGFHTLGLYVH), and 517-535 (FLVHHAIALGLHTTTLILV). The [4Fe-4S] cluster site is built by Cys559 and Cys568. 2 consecutive transmembrane segments (helical) span residues 575-596 (AFYLAVFWMLNTIGWVTFYWHW) and 643-665 (LSVWAWMFLFGHLVWATGFMFLI). His654, Met662, and Tyr670 together coordinate chlorophyll a. A phylloquinone-binding site is contributed by Trp671. A helical transmembrane segment spans residues 707–727 (LVGLAHFSVGYIFTYAAFLIA).

Belongs to the PsaA/PsaB family. In terms of assembly, the PsaA/B heterodimer binds the P700 chlorophyll special pair and subsequent electron acceptors. PSI consists of a core antenna complex that captures photons, and an electron transfer chain that converts photonic excitation into a charge separation. The eukaryotic PSI reaction center is composed of at least 11 subunits. P700 is a chlorophyll a/chlorophyll a' dimer, A0 is one or more chlorophyll a, A1 is one or both phylloquinones and FX is a shared 4Fe-4S iron-sulfur center. serves as cofactor.

It localises to the plastid. The protein localises to the chloroplast thylakoid membrane. It carries out the reaction reduced [plastocyanin] + hnu + oxidized [2Fe-2S]-[ferredoxin] = oxidized [plastocyanin] + reduced [2Fe-2S]-[ferredoxin]. PsaA and PsaB bind P700, the primary electron donor of photosystem I (PSI), as well as the electron acceptors A0, A1 and FX. PSI is a plastocyanin-ferredoxin oxidoreductase, converting photonic excitation into a charge separation, which transfers an electron from the donor P700 chlorophyll pair to the spectroscopically characterized acceptors A0, A1, FX, FA and FB in turn. Oxidized P700 is reduced on the lumenal side of the thylakoid membrane by plastocyanin. This is Photosystem I P700 chlorophyll a apoprotein A2 from Marchantia polymorpha (Common liverwort).